A 590-amino-acid polypeptide reads, in one-letter code: Cyclin-dependent kinase-like 3 (590 aa).

The 283-residue stretch at 4–286 (YETLGKVGEG…SSDLLHHEYF (283 aa)) folds into the Protein kinase domain. ATP is bound by residues 10-18 (VGEGSYGTV) and Lys33. Residues 45–51 (KIAMREI) carry the [NKR]KIAxRE motif. The Proton acceptor role is filled by Asp125. Thr158 bears the Phosphothreonine mark. Tyr160 bears the Phosphotyrosine mark. 2 disordered regions span residues 459–508 (RAKK…SNEN) and 547–590 (LKRE…PDVE). Polar residues predominate over residues 466-477 (SSQSIGQVMPNS). Composition is skewed to basic and acidic residues over residues 547 to 556 (LKRESKKTDS) and 580 to 590 (TERKKNLPDVE).

This sequence belongs to the protein kinase superfamily. CMGC Ser/Thr protein kinase family. CDC2/CDKX subfamily.

It localises to the cytoplasm. It catalyses the reaction L-seryl-[protein] + ATP = O-phospho-L-seryl-[protein] + ADP + H(+). It carries out the reaction L-threonyl-[protein] + ATP = O-phospho-L-threonyl-[protein] + ADP + H(+). This chain is Cyclin-dependent kinase-like 3, found in Macaca fascicularis (Crab-eating macaque).